A 322-amino-acid chain; its full sequence is 8-oxo-(d)GTP phosphatase (322 aa).

The interval 1-21 (MMPVDDLQEIPLSKDTTEKSK) is disordered. Residues 22 to 156 (HTVRAAGAVL…DDRKVLRRFV (135 aa)) enclose the Nudix hydrolase domain. Substrate is bound by residues 55–58 (RPRY), D60, and 65–67 (KGK). Mg(2+) is bound by residues K65, E81, and E85. Residues 66–87 (GKLDQGETEPVAAAREIHEETG) carry the Nudix box motif. The substrate site is built by Y101, K108, E127, and Y145. E127 serves as a coordination point for Mg(2+).

This sequence belongs to the Nudix hydrolase family. In terms of assembly, forms head-to-tail homodimers. It depends on Mg(2+) as a cofactor.

The catalysed reaction is 8-oxo-dGTP + H2O = 8-oxo-dGDP + phosphate + H(+). It catalyses the reaction 8-oxo-GTP + H2O = 8-oxo-GDP + phosphate + H(+). The enzyme catalyses 8-oxo-dGDP + H2O = 8-oxo-dGMP + phosphate + H(+). It carries out the reaction 8-oxo-GDP + H2O = 8-oxo-GMP + phosphate + H(+). The catalysed reaction is P(1),P(6)-bis(5'-adenosyl) hexaphosphate + H2O = 2 ATP + 2 H(+). It catalyses the reaction P(1),P(5)-bis(5'-adenosyl) pentaphosphate + H2O = ADP + ATP + 2 H(+). The enzyme catalyses P(1),P(4)-bis(5'-adenosyl) tetraphosphate + H2O = AMP + ATP + 2 H(+). Ap4A hydrolysis is inhibited by fluoride ions. Functionally, catalyzes the conversion of 8-oxo-dGTP to 8-oxo-dGDP, and 8-oxo-GTP to 8-oxo-GDP. At high enzyme concentrations, can also catalyze the conversion of 8-oxo-dGDP to 8-oxo-dGMP, and 8-oxo-GDP to 8-oxo-GMP. In addition, catalyzes the hydrolysis of the diadenosine polyphosphates diadenosine hexaphosphate (Ap6A), diadenosine pentaphosphate (Ap5A) and diadenosine tetraphosphate (Ap4A). This is 8-oxo-(d)GTP phosphatase from Mycolicibacterium smegmatis (strain ATCC 700084 / mc(2)155) (Mycobacterium smegmatis).